A 178-amino-acid chain; its full sequence is Dual-action ribosomal maturation protein DarP (178 aa).

It belongs to the DarP family.

The protein localises to the cytoplasm. Member of a network of 50S ribosomal subunit biogenesis factors which assembles along the 30S-50S interface, preventing incorrect 23S rRNA structures from forming. Promotes peptidyl transferase center (PTC) maturation. The sequence is that of Dual-action ribosomal maturation protein DarP from Haemophilus influenzae (strain 86-028NP).